The sequence spans 142 residues: Large ribosomal subunit protein uL13 (142 aa).

It belongs to the universal ribosomal protein uL13 family. Part of the 50S ribosomal subunit.

Its function is as follows. This protein is one of the early assembly proteins of the 50S ribosomal subunit, although it is not seen to bind rRNA by itself. It is important during the early stages of 50S assembly. This is Large ribosomal subunit protein uL13 from Caldicellulosiruptor saccharolyticus (strain ATCC 43494 / DSM 8903 / Tp8T 6331).